A 280-amino-acid polypeptide reads, in one-letter code: Acetylglutamate kinase (280 aa).

Residues 64 to 65, arginine 86, and asparagine 177 each bind substrate; that span reads GG.

The protein belongs to the acetylglutamate kinase family. ArgB subfamily.

The protein localises to the cytoplasm. It catalyses the reaction N-acetyl-L-glutamate + ATP = N-acetyl-L-glutamyl 5-phosphate + ADP. It functions in the pathway amino-acid biosynthesis; L-arginine biosynthesis; N(2)-acetyl-L-ornithine from L-glutamate: step 2/4. Functionally, catalyzes the ATP-dependent phosphorylation of N-acetyl-L-glutamate. The polypeptide is Acetylglutamate kinase (Nautilia profundicola (strain ATCC BAA-1463 / DSM 18972 / AmH)).